The primary structure comprises 263 residues: Chymotrypsinogen B2 (263 aa).

A signal peptide spans M1 to G18. Intrachain disulfides connect C19–C140, C60–C76, C154–C219, C186–C200, and C209–C238. The region spanning I34–A261 is the Peptidase S1 domain. Active-site charge relay system residues include H75 and D120. Catalysis depends on S213, which acts as the Charge relay system.

Belongs to the peptidase S1 family.

The protein localises to the secreted. It localises to the extracellular space. It carries out the reaction Preferential cleavage: Tyr-|-Xaa, Trp-|-Xaa, Phe-|-Xaa, Leu-|-Xaa.. This is Chymotrypsinogen B2 (CTRB2) from Homo sapiens (Human).